The chain runs to 469 residues: uncharacterized protein (469 aa).

Positions 11 to 65 (LFISVAFSQESVEDLKRLLEEYKKKIQEIERRLEELEKAKKEEEKKKEAVALKPT) form a coiled coil.

This is an uncharacterized protein from Aquifex aeolicus (strain VF5).